A 559-amino-acid chain; its full sequence is Formate--tetrahydrofolate ligase (559 aa).

68-75 (TPAGEGKS) serves as a coordination point for ATP.

It belongs to the formate--tetrahydrofolate ligase family.

The enzyme catalyses (6S)-5,6,7,8-tetrahydrofolate + formate + ATP = (6R)-10-formyltetrahydrofolate + ADP + phosphate. The protein operates within one-carbon metabolism; tetrahydrofolate interconversion. This Clostridium tetani (strain Massachusetts / E88) protein is Formate--tetrahydrofolate ligase.